The following is a 162-amino-acid chain: Caveolin-2 (162 aa).

At 1-86 the chain is on the cytoplasmic side; sequence MGLETEKADV…FEISKYVMYK (86 aa). Tyrosine 19 carries the post-translational modification Phosphotyrosine; by SRC. 2 positions are modified to phosphoserine: serine 20 and serine 23. Tyrosine 27 carries the phosphotyrosine; by SRC modification. Serine 36 carries the post-translational modification Phosphoserine. Positions 87–107 form an intramembrane region, helical; that stretch reads FLTVFLAIPLAFLAGILFATL. Residues 108–162 are Cytoplasmic-facing; sequence SCLHIWIIMPFVKTCLMVLPSVQTIWKSVTDAIIAPLCTSIGRSFSSVSLQLSQD.

This sequence belongs to the caveolin family. Monomer or homodimer. Interacts with CAV1; the interaction forms a stable heterooligomeric complex that is required for targeting to lipid rafts and for caveolae formation. Tyrosine phosphorylated forms do not form heterooligomers with the Tyr-19-phosphorylated form existing as a monomer or dimer, and the Tyr-27-form as a monomer only. Interacts (tyrosine phosphorylated form) with the SH2 domain-containing proteins, RASA1, NCK1 and SRC. Interacts (tyrosine phosphorylated form) with INSR, the interaction (Tyr-27-phosphorylated form) is increased on insulin stimulation. Interacts (Tyr-19 phosphorylated form) with MAPK1 (phosphorylated form); the interaction, promoted by insulin, leads to nuclear location and MAPK1 activation. Interacts with STAT3; the interaction is increased on insulin-induced tyrosine phosphorylation leading to STAT activation. In terms of processing, phosphorylated on serine and tyrosine residues. CAV1 promotes phosphorylation on Ser-23 which then targets the complex to the plasma membrane, lipid rafts and caveolae. Phosphorylation on Ser-36 appears to modulate mitosis in endothelial cells. Phosphorylation on both Tyr-19 and Tyr-27 is required for insulin-induced 'Ser-727' phosphorylation of STAT3 and its activation. Phosphorylation on Tyr-19 is required for insulin-induced phosphorylation of MAPK1 and DNA binding of STAT3. Tyrosine phosphorylation is induced by both EGF and insulin (By. similarity).

The protein resides in the nucleus. It localises to the cytoplasm. It is found in the golgi apparatus membrane. The protein localises to the cell membrane. Its subcellular location is the membrane. The protein resides in the caveola. In terms of biological role, may act as a scaffolding protein within caveolar membranes. Interacts directly with G-protein alpha subunits and can functionally regulate their activity. Acts as an accessory protein in conjunction with CAV1 in targeting to lipid rafts and driving caveolae formation. The Ser-36 phosphorylated form has a role in modulating mitosis in endothelial cells. Positive regulator of cellular mitogenesis of the MAPK signaling pathway. Required for the insulin-stimulated nuclear translocation and activation of MAPK1 and STAT3, and the subsequent regulation of cell cycle progression. This is Caveolin-2 (CAV2) from Callithrix jacchus (White-tufted-ear marmoset).